Here is a 170-residue protein sequence, read N- to C-terminus: RNA pyrophosphohydrolase (170 aa).

One can recognise a Nudix hydrolase domain in the interval 6-149; it reads GFRPNVGIVI…KRDVYRRALK (144 aa). The short motif at 38–59 is the Nudix box element; sequence GGIDDGETPEQAMYRELYEEVG.

The protein belongs to the Nudix hydrolase family. RppH subfamily. Requires a divalent metal cation as cofactor.

Accelerates the degradation of transcripts by removing pyrophosphate from the 5'-end of triphosphorylated RNA, leading to a more labile monophosphorylated state that can stimulate subsequent ribonuclease cleavage. This is RNA pyrophosphohydrolase from Aliivibrio salmonicida (strain LFI1238) (Vibrio salmonicida (strain LFI1238)).